We begin with the raw amino-acid sequence, 342 residues long: Thymidylate synthase (342 aa).

Residues Arg31 and 156-157 each bind dUMP; that span reads RR. The Nucleophile role is filled by Cys176. DUMP contacts are provided by residues 196–199, Asn207, and 237–239; these read RSGD and HVY. Asp199 is a binding site for (6R)-5,10-methylene-5,6,7,8-tetrahydrofolate. (6R)-5,10-methylene-5,6,7,8-tetrahydrofolate is bound at residue Ala341.

Belongs to the thymidylate synthase family. Bacterial-type ThyA subfamily. As to quaternary structure, homodimer.

It is found in the cytoplasm. The catalysed reaction is dUMP + (6R)-5,10-methylene-5,6,7,8-tetrahydrofolate = 7,8-dihydrofolate + dTMP. Its pathway is pyrimidine metabolism; dTTP biosynthesis. Its function is as follows. Catalyzes the reductive methylation of 2'-deoxyuridine-5'-monophosphate (dUMP) to 2'-deoxythymidine-5'-monophosphate (dTMP) while utilizing 5,10-methylenetetrahydrofolate (mTHF) as the methyl donor and reductant in the reaction, yielding dihydrofolate (DHF) as a by-product. This enzymatic reaction provides an intracellular de novo source of dTMP, an essential precursor for DNA biosynthesis. The protein is Thymidylate synthase of Haloferax volcanii (Halobacterium volcanii).